Here is a 304-residue protein sequence, read N- to C-terminus: Ring-infected erythrocyte surface antigen (304 aa).

Residues N18 and N22 are each glycosylated (N-linked (GlcNAc...) asparagine). The segment covering 142–159 (EHDAEENVEHDAEENVEH) has biased composition (basic and acidic residues). Residues 142–304 (EHDAEENVEH…EENVEEHNGI (163 aa)) are disordered. Acidic residues predominate over residues 160-298 (DAEENAEENV…NVEEYDEENV (139 aa)).

Its subcellular location is the cell membrane. Functionally, may disrupt the normal intermolecular interactions of the cytoplasmic domain of band 3 and thereby facilitate the invagination of the red cell membrane which is necessary for the formation of the parasitophorous vacuole. The chain is Ring-infected erythrocyte surface antigen (RESA) from Plasmodium falciparum (isolate Palo Alto / Uganda).